The sequence spans 230 residues: Orotidine 5'-phosphate decarboxylase (230 aa).

Residues aspartate 10, lysine 32, 59-68, threonine 119, arginine 180, glutamine 189, glycine 209, and arginine 210 contribute to the substrate site; that span reads DLKYHDIPNT. The active-site Proton donor is the lysine 61.

It belongs to the OMP decarboxylase family. Type 1 subfamily. Homodimer.

The catalysed reaction is orotidine 5'-phosphate + H(+) = UMP + CO2. Its pathway is pyrimidine metabolism; UMP biosynthesis via de novo pathway; UMP from orotate: step 2/2. Catalyzes the decarboxylation of orotidine 5'-monophosphate (OMP) to uridine 5'-monophosphate (UMP). The chain is Orotidine 5'-phosphate decarboxylase from Haemophilus ducreyi (strain 35000HP / ATCC 700724).